The following is a 925-amino-acid chain: Aspulvinone E synthetase melA (925 aa).

Residues 11 to 434 (ETAAARNGDG…GGRAKETIII (424 aa)) are adenylation (A) domain. The Carrier domain occupies 564–644 (SPKNDFEKGL…ELAAALDNLY (81 aa)). S601 bears the O-(pantetheine 4'-phosphoryl)serine mark. Residues 663-923 (PLWLVHPGAG…KILRSALAER (261 aa)) are thioesterase (TE) domain.

It belongs to the NRP synthetase family.

The protein localises to the cytoplasm. The enzyme catalyses 2 3-(4-hydroxyphenyl)pyruvate + AH2 + 2 ATP + O2 = aspulvinone E + A + 2 AMP + CO2 + 2 diphosphate + H2O + H(+). In terms of biological role, nonribosomal peptide synthase; part of the gene cluster that mediates the biosynthesis of Asp-melanin, a pigment that confers resistance against UV light and hampers phagocytosis by soil amoeba. The nonribosomal peptide synthase melA converts 4-hydroxyphenylpyruvate (4-HPPA) to aspulvinone E. The tyrosinase tyrP then performs hydroxylations of both aromatic moieties of aspulvinone E. The product of tyrP is highly unstable, and, due to the high reactivity of methides and ortho-diquinones, the polymeric Asp-melanin forms spontaneously. This is Aspulvinone E synthetase melA from Aspergillus terreus (strain NIH 2624 / FGSC A1156).